We begin with the raw amino-acid sequence, 184 residues long: uncharacterized protein (184 aa).

This is an uncharacterized protein from Dictyostelium discoideum (Social amoeba).